Reading from the N-terminus, the 94-residue chain is Small ribosomal subunit protein bS6 (94 aa).

The protein belongs to the bacterial ribosomal protein bS6 family.

Its function is as follows. Binds together with bS18 to 16S ribosomal RNA. In Phytoplasma mali (strain AT), this protein is Small ribosomal subunit protein bS6.